Reading from the N-terminus, the 365-residue chain is MSIIEKKIVLLPGDHVGVEVVEEAVKILKSISEVKPEIQFKFENHLIGGAAIDATGVPLPDEALEAAKKSDAVLLGAVGGPKWGTGEVRPEQGLLKIRKELNLYANLRPCNFASDKLLDLSPLKSDIVKGTDFTVVRELVGGIYFGDRVEDDGSGFASDSESYSVPEVERITRMAAFLSLQNDPPLPIWSLDKANVLASSRLWRKTVDRVIKEEFPKLTVQHQLIDSAAMILVKSPTKLNGIVITNNMFGDIISDEASVIPGSLGLLPSASLASLPDTNQAFGLYEPCHGSAPDLPKNKVNPIATILSAAMMLKLSLNLVKEGNAVEEAVRKVLDQGIMTGDLGGNNSTTEVGDAIAKEVKLLLA.

80-91 serves as a coordination point for NAD(+); it reads GPKWGTGEVRPE. Positions 98, 108, 137, and 226 each coordinate substrate. Aspartate 226, aspartate 251, and aspartate 255 together coordinate Mg(2+). 290 to 301 serves as a coordination point for NAD(+); the sequence is GSAPDLPKNKVN.

Belongs to the isocitrate and isopropylmalate dehydrogenases family. As to quaternary structure, homodimer. It depends on Mg(2+) as a cofactor. Mn(2+) is required as a cofactor.

It localises to the cytoplasm. The enzyme catalyses (2R,3S)-3-isopropylmalate + NAD(+) = 4-methyl-2-oxopentanoate + CO2 + NADH. Its pathway is amino-acid biosynthesis; L-leucine biosynthesis; L-leucine from 3-methyl-2-oxobutanoate: step 3/4. Functionally, catalyzes the oxidation of 3-carboxy-2-hydroxy-4-methylpentanoate (3-isopropylmalate) to 3-carboxy-4-methyl-2-oxopentanoate. The product decarboxylates to 4-methyl-2 oxopentanoate. The chain is 3-isopropylmalate dehydrogenase (LEU2) from Candida boidinii (Yeast).